The primary structure comprises 205 residues: Calcium-binding allergen Bet v 3 (205 aa).

The segment at 1–26 (MPCSTEAMEKAGHGHASTPRKRSLSN) is disordered. 4 EF-hand domains span residues 36 to 71 (LNTL…LGLE), 72 to 107 (TDLS…LNDS), 130 to 165 (QEEA…LGFS), and 168 to 203 (SEID…VLVR). Residues D49, N51, D53, and E60 each contribute to the Ca(2+) site. Ca(2+) is bound by residues D143, D145, D147, Y149, E154, D181, N183, D185, R187, and E192.

Functionally, could be involved in calcium metabolism in pollen. Binds 3 calcium ions. This Betula pendula (European white birch) protein is Calcium-binding allergen Bet v 3 (BETVIII).